Here is a 464-residue protein sequence, read N- to C-terminus: Light-independent protochlorophyllide reductase subunit N (464 aa).

[4Fe-4S] cluster contacts are provided by C29, C54, and C114.

The protein belongs to the BchN/ChlN family. As to quaternary structure, protochlorophyllide reductase is composed of three subunits; ChlL, ChlN and ChlB. Forms a heterotetramer of two ChlB and two ChlN subunits. It depends on [4Fe-4S] cluster as a cofactor.

The protein resides in the plastid. It is found in the chloroplast. It catalyses the reaction chlorophyllide a + oxidized 2[4Fe-4S]-[ferredoxin] + 2 ADP + 2 phosphate = protochlorophyllide a + reduced 2[4Fe-4S]-[ferredoxin] + 2 ATP + 2 H2O. It functions in the pathway porphyrin-containing compound metabolism; chlorophyll biosynthesis (light-independent). Component of the dark-operative protochlorophyllide reductase (DPOR) that uses Mg-ATP and reduced ferredoxin to reduce ring D of protochlorophyllide (Pchlide) to form chlorophyllide a (Chlide). This reaction is light-independent. The NB-protein (ChlN-ChlB) is the catalytic component of the complex. The sequence is that of Light-independent protochlorophyllide reductase subunit N from Stigeoclonium helveticum (Green alga).